A 223-amino-acid chain; its full sequence is Putative 3-methyladenine DNA glycosylase (223 aa).

This sequence belongs to the DNA glycosylase MPG family.

The protein is Putative 3-methyladenine DNA glycosylase of Rhodococcus jostii (strain RHA1).